Here is a 151-residue protein sequence, read N- to C-terminus: Endoribonuclease YbeY (151 aa).

Zn(2+) contacts are provided by His-113, His-117, and His-123.

This sequence belongs to the endoribonuclease YbeY family. The cofactor is Zn(2+).

It localises to the cytoplasm. Functionally, single strand-specific metallo-endoribonuclease involved in late-stage 70S ribosome quality control and in maturation of the 3' terminus of the 16S rRNA. This is Endoribonuclease YbeY from Polaromonas naphthalenivorans (strain CJ2).